The sequence spans 458 residues: Chromosomal replication initiator protein DnaA (458 aa).

Residues 1 to 79 form a domain I, interacts with DnaA modulators region; the sequence is MSLAIWQECL…ENPNHSVKIR (79 aa). Residues 79–120 form a domain II region; that stretch reads RLMVGNVSSVEKKPAKQIPTQAPLTNQPWEGESKAHRVPHKS. Residues 92-114 are disordered; that stretch reads PAKQIPTQAPLTNQPWEGESKAH. Residues 96–106 show a composition bias toward polar residues; the sequence is IPTQAPLTNQP. The domain III, AAA+ region stretch occupies residues 121 to 338; sequence NLIKKYTFDN…GAIANISAKA (218 aa). Glycine 165, glycine 167, lysine 168, and threonine 169 together coordinate ATP. The domain IV, binds dsDNA stretch occupies residues 339-458; that stretch reads QFTGQGITIS…YKILIRTLSM (120 aa).

Belongs to the DnaA family. As to quaternary structure, oligomerizes as a right-handed, spiral filament on DNA at oriC.

It is found in the cytoplasm. In terms of biological role, plays an essential role in the initiation and regulation of chromosomal replication. ATP-DnaA binds to the origin of replication (oriC) to initiate formation of the DNA replication initiation complex once per cell cycle. Binds the DnaA box (a 9 base pair repeat at the origin) and separates the double-stranded (ds)DNA. Forms a right-handed helical filament on oriC DNA; dsDNA binds to the exterior of the filament while single-stranded (ss)DNA is stabiized in the filament's interior. The ATP-DnaA-oriC complex binds and stabilizes one strand of the AT-rich DNA unwinding element (DUE), permitting loading of DNA polymerase. After initiation quickly degrades to an ADP-DnaA complex that is not apt for DNA replication. Binds acidic phospholipids. The polypeptide is Chromosomal replication initiator protein DnaA (Psychromonas ingrahamii (strain DSM 17664 / CCUG 51855 / 37)).